Reading from the N-terminus, the 487-residue chain is Selenium-binding protein 2 (487 aa).

At Ala2 the chain carries N-acetylalanine. Selenite is bound by residues Cys19 and Cys20.

It belongs to the selenium-binding protein family. Mostly expressed in seedlings, leaves and stems, and, to a lower extent, in flowers and roots.

Its function is as follows. Required for the fusion of female gametophyte polar nuclei. The chain is Selenium-binding protein 2 (SBP2) from Arabidopsis thaliana (Mouse-ear cress).